The primary structure comprises 394 residues: ORC1-type DNA replication protein 3 (394 aa).

Residues 66–70 and Y207 contribute to the ATP site; that span reads TGKTF.

The protein belongs to the CDC6/cdc18 family. As to quaternary structure, monomer. Interacts with Cdc6-1, Cdc6-2, MCM and PolB1.

In terms of biological role, involved in regulation of DNA replication. May play essential roles in origin recognition and cell cycle control of replication. Binds to DNA, with a preference for molecules that contain a bubble, a fork, or a tail. Inhibits the binding of the MCM helicase to the origin DNA and inhibits its DNA helicase activity. Also regulates the DNA polymerase and the nuclease activities of PolB1. Inhibits the DNA-binding activity of Cdc6-1 and Cdc6-2. The sequence is that of ORC1-type DNA replication protein 3 (cdc6-3) from Saccharolobus solfataricus (strain ATCC 35092 / DSM 1617 / JCM 11322 / P2) (Sulfolobus solfataricus).